The chain runs to 656 residues: Membrane-associated tyrosine- and threonine-specific cdc2-inhibitory kinase wee-1.3 (656 aa).

Polar residues predominate over residues 1 to 11 (MDETENNTSID). The tract at residues 1-24 (MDETENNTSIDSVEVGPSSPRVVA) is disordered. The Protein kinase domain occupies 107 to 354 (FQIDEIIGRG…SDALRKHLSI (248 aa)). Residues 113-121 (IGRGSFGEV) and lysine 136 each bind ATP. Aspartate 227 (proton acceptor) is an active-site residue. Residues asparagine 232 and aspartate 245 each coordinate Mg(2+). 2 disordered regions span residues 449–552 (PFDF…NSSI) and 617–656 (KGKEKPVVEPAELRQRPMRNGLKSLRSRMASFQGSSGDEN). A compositionally biased stretch (polar residues) spans 486–505 (ATCSSSNSSAIETAEDSLSS). Residues 617-631 (KGKEKPVVEPAELRQ) are compositionally biased toward basic and acidic residues. A compositionally biased stretch (polar residues) spans 646 to 656 (ASFQGSSGDEN).

It belongs to the protein kinase superfamily. Ser/Thr protein kinase family. WEE1 subfamily.

Its subcellular location is the golgi apparatus membrane. It localises to the cytoplasm. It carries out the reaction L-seryl-[protein] + ATP = O-phospho-L-seryl-[protein] + ADP + H(+). The enzyme catalyses L-threonyl-[protein] + ATP = O-phospho-L-threonyl-[protein] + ADP + H(+). Its function is as follows. Acts as a negative regulator of entry into mitosis (G2 to M transition) by phosphorylation of the CDK1 kinase during oocyte maturation. Required for embryonic development, germline proliferation and initiation of meiosis during spermatogenesis. Required for chromosome structure during mitosis and negative regulation of nuclear envelope breakdown. This Caenorhabditis briggsae protein is Membrane-associated tyrosine- and threonine-specific cdc2-inhibitory kinase wee-1.3.